A 1072-amino-acid chain; its full sequence is Guanylyl cyclase C (1072 aa).

Residues 1-19 (MTSLLGLAVRLLLFQPALM) form the signal peptide. The Extracellular segment spans residues 20 to 433 (VFWASQVRQN…VPGLGPQILM (414 aa)). Asn-32, Asn-75, Asn-79, Asn-179, Asn-188, Asn-195, Asn-284, Asn-307, Asn-345, and Asn-402 each carry an N-linked (GlcNAc...) asparagine glycan. A helical membrane pass occupies residues 434–454 (IAVFTLTGILVVLLLIALLVL). The Cytoplasmic segment spans residues 455-1072 (RKYRRDHALR…NNSDHDSTYF (618 aa)). The region spanning 489-748 (LKIDDDRRRD…KIESTLAKIF (260 aa)) is the Protein kinase domain. The region spanning 823–953 (TIYFSDIVGF…DTVNTASRME (131 aa)) is the Guanylate cyclase domain.

Belongs to the adenylyl cyclase class-4/guanylyl cyclase family. In terms of assembly, homotrimer. Interacts via its C-terminal region with NHERF4. Interacts with the lectin chaperone VIP36. Post-translationally, glycosylation at Asn-75 and/or Asn-79 is required for interaction with VIP36 while glycosylation at Asn-345 and Asn-402 modulates ligand-mediated GC-C activation.

The protein resides in the cell membrane. Its subcellular location is the endoplasmic reticulum membrane. It catalyses the reaction GTP = 3',5'-cyclic GMP + diphosphate. Guanylyl cyclase that catalyzes synthesis of cyclic GMP (cGMP) from GTP. This chain is Guanylyl cyclase C (Gucy2c), found in Mus musculus (Mouse).